Consider the following 412-residue polypeptide: tRNA N6-adenosine threonylcarbamoyltransferase, mitochondrial (412 aa).

Residues 1–78 (MLCLVYNSIL…IICLNTHRTI (78 aa)) constitute a mitochondrion transit peptide. A divalent metal cation contacts are provided by histidine 157 and histidine 161. Substrate-binding positions include 179–183 (LVSGG), aspartate 212, alanine 228, glutamate 232, 328–329 (RN), and serine 363. Aspartate 364 contributes to the a divalent metal cation binding site.

Belongs to the KAE1 / TsaD family. As to quaternary structure, homodimer. It depends on a divalent metal cation as a cofactor.

Its subcellular location is the mitochondrion. It catalyses the reaction L-threonylcarbamoyladenylate + adenosine(37) in tRNA = N(6)-L-threonylcarbamoyladenosine(37) in tRNA + AMP + H(+). In terms of biological role, required for the formation of a threonylcarbamoyl group on adenosine at position 37 (t(6)A37) in mitochondrial tRNAs that read codons beginning with adenine. Probably involved in the transfer of the threonylcarbamoyl moiety of threonylcarbamoyl-AMP (TC-AMP) to the N6 group of A37. Involved in mitochondrial genome maintenance. The sequence is that of tRNA N6-adenosine threonylcarbamoyltransferase, mitochondrial (pgp1) from Schizosaccharomyces pombe (strain 972 / ATCC 24843) (Fission yeast).